The following is a 1010-amino-acid chain: Probable LRR receptor-like serine/threonine-protein kinase At3g47570 (1010 aa).

A signal peptide spans 1-19; the sequence is MRLFLLLAFNALMLLETHG. Over 20-645 the chain is Extracellular; it reads FTDETDRQAL…SSRLKKVVIG (626 aa). N-linked (GlcNAc...) asparagine glycans are attached at residues Asn-48 and Asn-88. 10 LRR repeats span residues 89–113, 114–137, 139–161, 162–185, 186–209, 211–233, 234–258, 259–282, 283–307, and 310–333; these read LSFL…VGQL, SRLE…LYNC, RLLN…LGSL, TNLV…LGNL, TLLE…VAQL, QIWS…LYNL, SSLK…GILL, PNLL…LSNI, STLE…NVPN, and LLFL…TSLT. Asn-136 carries an N-linked (GlcNAc...) asparagine glycan. An N-linked (GlcNAc...) asparagine glycan is attached at Asn-184. Residues Asn-221 and Asn-232 are each glycosylated (N-linked (GlcNAc...) asparagine). Asn-281 and Asn-294 each carry an N-linked (GlcNAc...) asparagine glycan. N-linked (GlcNAc...) asparagine glycosylation is found at Asn-334 and Asn-358. LRR repeat units lie at residues 335–359, 361–384, 385–408, 410–432, 433–455, 457–480, 481–504, 505–528, 530–551, 552–574, and 575–600; these read CTQL…IANL, AKLV…IGNL, INLQ…LGKL, NLRY…IGNM, TMLE…SLGN, SHLL…IMKI, QQLL…IGAL, QNLG…LGNC, TMES…LKGL, VGVK…YFAS, and FSKL…IFEN. N-linked (GlcNAc...) asparagine glycosylation is found at Asn-431, Asn-455, and Asn-470. N-linked (GlcNAc...) asparagine glycosylation is found at Asn-582 and Asn-600. The chain crosses the membrane as a helical span at residues 646-666; the sequence is VSVGITLLLLLFMASVTLIWL. Residues 667–1010 are Cytoplasmic-facing; the sequence is RKRKKNKETN…FFKASRTTWR (344 aa). Residue Thr-699 is modified to Phosphothreonine. Residues 702-1002 form the Protein kinase domain; sequence FSSSNMVGSG…ELISIRERFF (301 aa). ATP-binding positions include 708–716 and Lys-731; that span reads VGSGSFGTV. Phosphotyrosine is present on residues Tyr-781 and Tyr-826. The active-site Proton acceptor is Asp-839. Tyr-887 carries the phosphotyrosine modification.

Belongs to the protein kinase superfamily. Ser/Thr protein kinase family.

Its subcellular location is the cell membrane. The enzyme catalyses L-seryl-[protein] + ATP = O-phospho-L-seryl-[protein] + ADP + H(+). The catalysed reaction is L-threonyl-[protein] + ATP = O-phospho-L-threonyl-[protein] + ADP + H(+). This chain is Probable LRR receptor-like serine/threonine-protein kinase At3g47570, found in Arabidopsis thaliana (Mouse-ear cress).